The chain runs to 291 residues: Formamidopyrimidine-DNA glycosylase (291 aa).

Pro-2 acts as the Schiff-base intermediate with DNA in catalysis. The active-site Proton donor is the Glu-3. The active-site Proton donor; for beta-elimination activity is the Lys-61. 3 residues coordinate DNA: His-103, Arg-123, and Arg-165. Residues 251-285 (EVYGRGGQACSRCASTIRRDAFMNRSSFSCPACQP) form an FPG-type zinc finger. Arg-275 serves as the catalytic Proton donor; for delta-elimination activity.

This sequence belongs to the FPG family. As to quaternary structure, monomer. The cofactor is Zn(2+).

The catalysed reaction is Hydrolysis of DNA containing ring-opened 7-methylguanine residues, releasing 2,6-diamino-4-hydroxy-5-(N-methyl)formamidopyrimidine.. It carries out the reaction 2'-deoxyribonucleotide-(2'-deoxyribose 5'-phosphate)-2'-deoxyribonucleotide-DNA = a 3'-end 2'-deoxyribonucleotide-(2,3-dehydro-2,3-deoxyribose 5'-phosphate)-DNA + a 5'-end 5'-phospho-2'-deoxyribonucleoside-DNA + H(+). Involved in base excision repair of DNA damaged by oxidation or by mutagenic agents. Acts as a DNA glycosylase that recognizes and removes damaged bases. Has a preference for oxidized purines, such as 7,8-dihydro-8-oxoguanine (8-oxoG). Has AP (apurinic/apyrimidinic) lyase activity and introduces nicks in the DNA strand. Cleaves the DNA backbone by beta-delta elimination to generate a single-strand break at the site of the removed base with both 3'- and 5'-phosphates. This chain is Formamidopyrimidine-DNA glycosylase, found in Parafrankia sp. (strain EAN1pec).